Consider the following 542-residue polypeptide: Putative inactive cadmium/zinc-transporting ATPase HMA3 (542 aa).

Residues 1–89 (MAEGEESKKM…VRPYGETSLK (89 aa)) lie on the Cytoplasmic side of the membrane. One can recognise an HMA domain in the interval 13–79 (QTSYFDVVGI…ALNQARLEAS (67 aa)). Residues 90 to 111 (SQWPSPFAIVSGVLLVLSFFKY) form a helical membrane-spanning segment. The Extracellular portion of the chain corresponds to 112 to 114 (FYS). The helical transmembrane segment at 115 to 134 (PLEWLAIVAVVAGVFPILAK) threads the bilayer. The Cytoplasmic portion of the chain corresponds to 135–141 (AVASVTR). The helical transmembrane segment at 142–162 (FRLDINALTLIAVIATLCMQD) threads the bilayer. Residue F163 is a topological domain, extracellular. The helical transmembrane segment at 164-184 (TEAATIVFLFSVADWLESSAA) threads the bilayer. The Cytoplasmic segment spans residues 185–310 (HKASIVMSSL…QTKTQRFIDK (126 aa)). A helical transmembrane segment spans residues 311-333 (CSRYYTPAVVVSAACFAVIPVLL). Over 334–341 (KVQDLSHW) the chain is Extracellular. The chain crosses the membrane as a helical span at residues 342-359 (FHLALVVLVSGCPCGLIL). Residues 360–542 (STPVATFCAL…VAQALKELKS (183 aa)) lie on the Cytoplasmic side of the membrane.

The protein belongs to the cation transport ATPase (P-type) (TC 3.A.3) family. Type IB subfamily.

It is found in the membrane. The polypeptide is Putative inactive cadmium/zinc-transporting ATPase HMA3 (HMA3) (Arabidopsis thaliana (Mouse-ear cress)).